Consider the following 281-residue polypeptide: NADPH-dependent 7-cyano-7-deazaguanine reductase (281 aa).

81–83 (IES) contributes to the substrate binding site. 83-84 (SK) contributes to the NADPH binding site. The active-site Thioimide intermediate is the Cys-188. Residue Asp-195 is the Proton donor of the active site. Residue 227–228 (HE) participates in substrate binding. 256 to 257 (RG) provides a ligand contact to NADPH.

It belongs to the GTP cyclohydrolase I family. QueF type 2 subfamily. As to quaternary structure, homodimer.

The protein localises to the cytoplasm. The enzyme catalyses 7-aminomethyl-7-carbaguanine + 2 NADP(+) = 7-cyano-7-deazaguanine + 2 NADPH + 3 H(+). It participates in tRNA modification; tRNA-queuosine biosynthesis. Catalyzes the NADPH-dependent reduction of 7-cyano-7-deazaguanine (preQ0) to 7-aminomethyl-7-deazaguanine (preQ1). This is NADPH-dependent 7-cyano-7-deazaguanine reductase from Paracidovorax citrulli (strain AAC00-1) (Acidovorax citrulli).